The sequence spans 85 residues: SCOCO-like protein 1 (85 aa).

A compositionally biased stretch (polar residues) spans 1–20 (MSAENISTGSPTGKQPSSEV). The segment at 1–34 (MSAENISTGSPTGKQPSSEVNLGEREAGTKNERM) is disordered. S2 carries the post-translational modification N-acetylserine. Phosphoserine is present on S10. Positions 22-34 (LGEREAGTKNERM) are enriched in basic and acidic residues.

The protein belongs to the SLO1 family. In terms of assembly, interacts with ARL3.

The polypeptide is SCOCO-like protein 1 (SLO1) (Saccharomyces cerevisiae (strain ATCC 204508 / S288c) (Baker's yeast)).